The chain runs to 688 residues: Methionine--tRNA ligase (688 aa).

Residues 15-25 carry the 'HIGH' region motif; that stretch reads PYANGPIHLGH. Residues C146, C149, C159, and C162 each coordinate Zn(2+). A 'KMSKS' region motif is present at residues 332–336; sequence KMSKS. K335 contributes to the ATP binding site. The segment at 552–576 is disordered; that stretch reads AEAPKKADSKKATDTPVDTRPPLES. The span at 554–564 shows a compositional bias: basic and acidic residues; that stretch reads APKKADSKKAT. Residues 587–688 form the tRNA-binding domain; sequence DFAKIDLRIA…EGAQPGMRVK (102 aa).

It belongs to the class-I aminoacyl-tRNA synthetase family. MetG type 1 subfamily. Homodimer. Zn(2+) serves as cofactor.

It localises to the cytoplasm. The catalysed reaction is tRNA(Met) + L-methionine + ATP = L-methionyl-tRNA(Met) + AMP + diphosphate. Is required not only for elongation of protein synthesis but also for the initiation of all mRNA translation through initiator tRNA(fMet) aminoacylation. The chain is Methionine--tRNA ligase from Shewanella woodyi (strain ATCC 51908 / MS32).